Reading from the N-terminus, the 68-residue chain is MQVYQCCEAIRIAYNQIGSGEQGYVPQAIAATIRALNAVASDERVPAELRQEAAYAAANLLISDHQDA.

The protein belongs to the UPF0253 family.

This Aeromonas salmonicida (strain A449) protein is UPF0253 protein ASA_2184.